The following is a 461-amino-acid chain: Transforming growth factor beta-1-induced transcript 1 protein (461 aa).

At methionine 1 the chain carries N-acetylmethionine. The interval 1 to 86 is disordered; it reads MEDLDALLSD…PPFSSSSGVL (86 aa). Residues 1–200 form a transcription activation region; it reads MEDLDALLSD…GCPSPPGQTN (200 aa). The segment at 1-240 is interaction with PTK2B/PYK2; that stretch reads MEDLDALLSD…CNKPIAGQVV (240 aa). The LD motif 1 signature appears at 3-15; sequence DLDALLSDLETTT. At threonine 33 the chain carries Phosphothreonine. Residue tyrosine 38 is modified to Phosphotyrosine. Positions 41 to 52 are enriched in polar residues; sequence QPQTGSGESSGA. Tyrosine 60 carries the post-translational modification Phosphotyrosine; by FAK2 and FYN. Position 68 is a phosphoserine (serine 68). The span at 69–83 shows a compositional bias: low complexity; sequence PKSVAPVAPPFSSSS. The interaction with PTK2/FAK1 stretch occupies residues 83 to 136; that stretch reads SGVLGNGLCELDRLLQELNATQFNITDEIMSQFPSSKMAEGEGKEDQSEDKSIT. The LD motif 2 signature appears at 92–104; the sequence is ELDRLLQELNATQ. The tract at residues 116–154 is disordered; sequence PSSKMAEGEGKEDQSEDKSITTVPSSTFPAPSKPSATSA. Basic and acidic residues predominate over residues 121 to 134; the sequence is AEGEGKEDQSEDKS. Positions 135 to 154 are enriched in polar residues; sequence ITTVPSSTFPAPSKPSATSA. Phosphoserine is present on residues serine 140, serine 141, serine 164, and serine 186. The LD motif 3 motif lies at 157-168; it reads ELDRLMASLSDF. The segment at 171-204 is disordered; it reads QNHLPASGPPQPPAVSPTREGCPSPPGQTNKGSL. A Phosphothreonine modification is found at threonine 188. Serine 194 bears the Phosphoserine mark. The short motif at 203–215 is the LD motif 4 element; sequence SLDTMLGLLQSDL. LIM zinc-binding domains are found at residues 226–285, 286–343, 344–403, and 404–461; these read GLCG…RFSP, RCGF…QLFA, PRCQ…QRGS, and LCAT…KLFG. Phosphoserine is present on serine 403. Threonine 407 bears the Phosphothreonine mark.

The protein belongs to the paxillin family. In terms of assembly, homooligomer. Interacts with PPARG. Interacts with TRAF4. Interacts with CRIP2. Interacts with HSPB1. Interacts with ILK. Interacts with LIMS1 and LIMS2. Interacts with NCK2. Interacts with NUDT16L1. Interacts with PAK. Interacts with PTPN12. Interacts with TCF3. Interacts with TCF7L2. Interacts with VCL. Interacts (via LD motif 3) with GIT1. Also interacts with GIT2. Forms a complex with ARHGEF7. Interacts with AR/androgen receptor in a ligand-dependent manner. Interacts with CSK. Interacts with PTK2/FAK1 and PTK2B/PYK2. Interacts with SLC6A3 and SLC6A4. Interacts with NR3C1. Interacts with SMAD3. Interacts with MAPK15. Interacts with SRC. Interacts with LYN. Interacts with talin. Interacts (via LIM zinc-binding domain 2) with CBLC (via RING-type zinc finger); the interaction is direct and enhances CBLC E3 ubiquitin-protein ligase activity. Interacts with PARVA. Interacts with PXN. Phosphorylated by gonadotropin-releasing hormone-activated SRC. Strongly expressed in large intestine, lung, spleen, testis, uterus and to a lower extent in brain, kidney and liver (at protein level). In brain, expressed by neuronal and non neuronal cells (at protein level).

Its subcellular location is the cell junction. It is found in the focal adhesion. The protein localises to the nucleus matrix. The protein resides in the cytoplasm. It localises to the cytoskeleton. In terms of biological role, functions as a molecular adapter coordinating multiple protein-protein interactions at the focal adhesion complex and in the nucleus. Links various intracellular signaling modules to plasma membrane receptors and regulates the Wnt and TGFB signaling pathways. May also regulate SLC6A3 and SLC6A4 targeting to the plasma membrane hence regulating their activity. In the nucleus, functions as a nuclear receptor coactivator regulating glucocorticoid, androgen, mineralocorticoid and progesterone receptor transcriptional activity. May play a role in the processes of cell growth, proliferation, migration, differentiation and senescence. May have a zinc-dependent DNA-binding activity. In Rattus norvegicus (Rat), this protein is Transforming growth factor beta-1-induced transcript 1 protein (Tgfb1i1).